The following is a 263-amino-acid chain: Achaete-scute homolog 2 (263 aa).

Disordered stretches follow at residues 104–126 and 194–248; these read RRRR…RNER and PPSD…ELSP. 3 stretches are compositionally biased toward low complexity: residues 110 to 121, 202 to 220, and 230 to 247; these read ATEASSSSAAVA, PSAS…SPSP, and SPRS…GELS. In terms of domain architecture, bHLH spans 118–170; that stretch reads AAVARRNERERNRVKLVNLGFQALRQHVPHGGANKKLSKVETLRSAVEYIRAL.

As to quaternary structure, efficient DNA binding requires dimerization with another basic helix-loop-helix (bHLH) protein. Forms heterodimers with bHLH transcription factor TCF3. May not heterodimerise with bHLH protein HAND1. As to expression, expressed in follicular T-helper (Tfh) cells.

The protein resides in the nucleus. Its function is as follows. Transcription factor. Binds to E-box motifs 5'-CANNTG-3' in the regulatory elements of target genes, probably as a heterodimer with another basic helix-loop-helix (bHLH) protein such as the transcription factor TCF3. May bind both open and closed chromatin, acting as a pioneer transcription factor to allow other factors to bind and activate lineage-specific genes. Required during post-implantation development for the generation of some differentiated trophoblast cell types. Transcriptional activity of ASCL2 may be antagonised in a subset of trophoblast cells by bHLH transcription factor HAND1, perhaps by competing for dimerization with other bHLH proteins. Involved in differentiation and function of follicular T-helper (Tfh) cells, thereby playing a role in germinal center responses; probably modulates expression of genes involved in Tfh cell function, such as BCL6. May also act as a suppressor of Th1-, Th2- and Th17-cell differentiation. Induces the formation of stem cells in intestinal crypts in vitro, synergistically activating transcription of target genes, such as SOX9, together with TCF4/beta-catenin. May form a bistable transcriptional switch, controlling expression of its own gene together with Wnt/R-spondin signaling, and thereby maintaining stem cell characteristics. Modulates expression of target genes, including perhaps down-regulating EGR1/Krox24 and chemokine CXCL10/Mob-1 and up-regulating CXCR4 and CDKN1C/p57kip2, in Schwann cells. May play a role in reducing proliferation of Schwann cells, perhaps acting via modulation of expression of CDKN1C. May be dispensable for blastocyst formation and later embryonic function. May be involved in the determination of neuronal precursors. The chain is Achaete-scute homolog 2 (Ascl2) from Mus musculus (Mouse).